We begin with the raw amino-acid sequence, 340 residues long: Glycerol-3-phosphate dehydrogenase [NAD(P)+] (340 aa).

Residues S14, Y15, H35, and K109 each contribute to the NADPH site. The sn-glycerol 3-phosphate site is built by K109, G138, and T140. A142 provides a ligand contact to NADPH. Residues K194, D247, S257, R258, and N259 each coordinate sn-glycerol 3-phosphate. Catalysis depends on K194, which acts as the Proton acceptor. R258 serves as a coordination point for NADPH. NADPH-binding residues include V282 and E284.

Belongs to the NAD-dependent glycerol-3-phosphate dehydrogenase family.

The protein localises to the cytoplasm. The enzyme catalyses sn-glycerol 3-phosphate + NAD(+) = dihydroxyacetone phosphate + NADH + H(+). It catalyses the reaction sn-glycerol 3-phosphate + NADP(+) = dihydroxyacetone phosphate + NADPH + H(+). It participates in membrane lipid metabolism; glycerophospholipid metabolism. Its function is as follows. Catalyzes the reduction of the glycolytic intermediate dihydroxyacetone phosphate (DHAP) to sn-glycerol 3-phosphate (G3P), the key precursor for phospholipid synthesis. This is Glycerol-3-phosphate dehydrogenase [NAD(P)+] from Photorhabdus laumondii subsp. laumondii (strain DSM 15139 / CIP 105565 / TT01) (Photorhabdus luminescens subsp. laumondii).